A 345-amino-acid polypeptide reads, in one-letter code: tRNA-specific 2-thiouridylase MnmA (345 aa).

Residues 6-13 and leucine 32 each bind ATP; that span reads LMSGGVDS. The active-site Nucleophile is cysteine 92. Cysteines 92 and 191 form a disulfide. Glycine 116 is a binding site for ATP. Residues 138–140 form an interaction with tRNA region; that stretch reads KDQ. Cysteine 191 (cysteine persulfide intermediate) is an active-site residue. Residues 293–294 are interaction with tRNA; it reads RY.

This sequence belongs to the MnmA/TRMU family.

The protein localises to the cytoplasm. The enzyme catalyses S-sulfanyl-L-cysteinyl-[protein] + uridine(34) in tRNA + AH2 + ATP = 2-thiouridine(34) in tRNA + L-cysteinyl-[protein] + A + AMP + diphosphate + H(+). Functionally, catalyzes the 2-thiolation of uridine at the wobble position (U34) of tRNA, leading to the formation of s(2)U34. The sequence is that of tRNA-specific 2-thiouridylase MnmA from Helicobacter hepaticus (strain ATCC 51449 / 3B1).